The primary structure comprises 497 residues: NADH-ubiquinone oxidoreductase chain 4 (497 aa).

A run of 14 helical transmembrane segments spans residues 3-23 (FLLY…LLII), 42-62 (LFFS…SDNI), 94-114 (ISLL…LISW), 122-142 (NSFI…FCVL), 144-164 (LVFF…LIGV), 178-198 (LFFY…VIYS), 220-240 (ILWA…PFHI), 250-270 (PTVG…YGLL), 276-296 (IFCD…LLGI), 313-333 (IAYA…TSNI), 340-360 (VFLM…IGCV), 374-394 (GLVS…LSNI), 418-438 (FAAL…IWLY), and 463-483 (VVGF…SYII).

It belongs to the complex I subunit 4 family.

The protein resides in the mitochondrion membrane. The catalysed reaction is a ubiquinone + NADH + 5 H(+)(in) = a ubiquinol + NAD(+) + 4 H(+)(out). Its function is as follows. Core subunit of the mitochondrial membrane respiratory chain NADH dehydrogenase (Complex I) that is believed to belong to the minimal assembly required for catalysis. Complex I functions in the transfer of electrons from NADH to the respiratory chain. The immediate electron acceptor for the enzyme is believed to be ubiquinone. The chain is NADH-ubiquinone oxidoreductase chain 4 (ND4) from Acanthamoeba castellanii (Amoeba).